We begin with the raw amino-acid sequence, 329 residues long: Malate dehydrogenase (329 aa).

12–18 lines the NAD(+) pocket; it reads GAAGQIG. Substrate-binding residues include arginine 95 and arginine 101. NAD(+) contacts are provided by residues asparagine 108, glutamine 115, and 132 to 134; that span reads VGN. Residues asparagine 134 and arginine 165 each coordinate substrate. Histidine 190 acts as the Proton acceptor in catalysis.

This sequence belongs to the LDH/MDH superfamily. MDH type 2 family.

It carries out the reaction (S)-malate + NAD(+) = oxaloacetate + NADH + H(+). Catalyzes the reversible oxidation of malate to oxaloacetate. In Polynucleobacter necessarius subsp. necessarius (strain STIR1), this protein is Malate dehydrogenase.